We begin with the raw amino-acid sequence, 185 residues long: Mu-like prophage FluMu protein gp16 (185 aa).

This sequence to phage Mu protein gp16.

This is Mu-like prophage FluMu protein gp16 from Haemophilus influenzae (strain ATCC 51907 / DSM 11121 / KW20 / Rd).